Consider the following 1585-residue polypeptide: MSPPISPTPPPLQPPFPPTAIARGPDRPDPPPQHQQAAESLVNAAAQHVAPTCPPTSDELPQMEDQATNSSNDSLIPSRQAPDQEETENAITAGTPPDEMEPTKDAQTVRFSSSSPASYSTHEYPTEGINEPRTSSRAPNTASSQMAESSCDFRSSRDIGSIRMGASALVSALNALPWEEDDDSDDGEDDDEFIEPARGSSSTIYERKQRPQTPSTSHGFHPTHTLHFPFRQNAIARRACQPGTTELDYQYATPETSSRRTSAAGSESSSEGEVPLPKGFVSHPNLIVPSGEGEAAAHPDPKLISDRITKEQQIADVEEQAEILRSAEEQEMRLGKEFVPPKSRDSADLNVDAALREGGSEREDVIEEQMQTNEAEKRLTRNEKLAERLMEVFGLEEREEVLEEMKCWLLRSVMLKGYMYLTKRHICFFANMPNENNLLVKSGPLHKKASRSKLNTKFWVVLKNDVLSWYESTSDPYFPKGNISLQYCHSCDAVSGTRFKVRTSERNYTFTADTESSRDEWVKAIQKVMFKTQHEGETIKLIIPLEAIVDVEKSPTLEFTETIEVKCIDAEDQMSVDSYFFASFPDNDYAFSAIQKLVRERPSPPELPRISSVTTIHANQEPLDTSHATIKRHGTDSSAEKLGMASHRPFRKISSVLKPLILKSSDGEPLEEHSQGPHHNDEDASHLPHIEAISNRRRSEEESDNDYFDGYPPRQVGPPPPSMNDDARNWRPSWIRKPASKLFGSSPSGSFVSHPGRLPTDSSTTVTESGPSLRSRTGRTKQASVTEVMEPPIQYEEEVSEDEMSNKPSVVDSNSAETARKRAARLSWTSETSSGSQMVKSKSDFSMLGSESGHSESAETVRKFRTFFALSDKEELIDHFPGYLYRVLPVSGRFFISTNYFCFRSSQLLYKTKESFRLMIIPIRDLYGLKAQKAFRFGHSGLTVVIKGHEEIFIEFRSASRRKACIALLEERMEAVRLSGENTIVDSHKIEARIMEDLDESTPVEPKSPWPVSPSPLFGSTTSTSFLEFKPEPMKITCLTIGSRGDVQPYIALCKGLQAEGHITKIATHGEYKAWVEGHGIAFESVGGDPAELMQMCVDNGMFTVSFLKEGLQKFRGWLDDLLNSSWEACQGSDLLIESPSAMSGIHVAEALRIPYYRAFTMPWTRTRAYPHAFAVPEHGRGGPYNYMTYTMFDQVFWRAISGQVNRWRRNVLGLDATTFDKMEQHKVPFLYNFSPTVVPPPLDWTEWIHVTGYWFLDKADEKQGEKSWTPPQGLVDFIDKAHGEEKKVVYIGFGSIVVSDPEEMTRCVVEAVVNSGVCAILSKGWSDRGSKKGEPKGDSEGADGVKYPPEIFAIDSIDHGWLFPRIDAACHHGGAGTTGASLRAGIPTIIKPFFGDQAFWAERVESLNVGSSIRRLTSHQLASALIKATTDEKQISKARVVGEMIRKENGITRAIEAIYRDLEYAKSIIKSLPSTDDRTPERISSHLHPLTTADLSFNRVRSRSRSRSRSSQGRFSPRRHTVDDDGWSVVSGGSRSRSGSASAVTSPERRPLNIGSALGSHVFKTALLPNTFGKWRNLEEGDDR.

Residues 1–18 show a composition bias toward pro residues; it reads MSPPISPTPPPLQPPFPP. Disordered regions lie at residues 1–154, 177–225, and 249–279; these read MSPP…CDFR, PWEE…PTHT, and YQYA…LPKG. Composition is skewed to polar residues over residues 65–77, 105–123, and 132–148; these read DQAT…SLIP, DAQT…STHE, and PRTS…QMAE. Positions 178–194 are enriched in acidic residues; it reads WEEDDDSDDGEDDDEFI. Over residues 255–273 the composition is skewed to low complexity; the sequence is ETSSRRTSAAGSESSSEGE. A GRAM 1 domain is found at 387–555; the sequence is ERLMEVFGLE…EAIVDVEKSP (169 aa). Positions 438 to 530 constitute a PH domain; the sequence is LLVKSGPLHK…WVKAIQKVMF (93 aa). Disordered regions lie at residues 625–645 and 666–852; these read TSHA…LGMA and DGEP…GSES. Over residues 670–689 the composition is skewed to basic and acidic residues; sequence LEEHSQGPHHNDEDASHLPH. 3 stretches are compositionally biased toward polar residues: residues 760 to 785, 806 to 817, and 827 to 840; these read TDSS…QASV, NKPSVVDSNSAE, and SWTS…QMVK. Residues 862–933 enclose the GRAM 2 domain; that stretch reads RKFRTFFALS…RDLYGLKAQK (72 aa). 10 residues coordinate UDP-alpha-D-glucose: Ser-1043, Arg-1044, Asp-1046, Ile-1358, His-1360, His-1373, Gly-1377, Thr-1378, Asp-1397, and Gln-1398. The segment at 1499–1555 is disordered; the sequence is NRVRSRSRSRSRSSQGRFSPRRHTVDDDGWSVVSGGSRSRSGSASAVTSPERRPLNI. Positions 1529–1545 are enriched in low complexity; that stretch reads SVVSGGSRSRSGSASAV.

It belongs to the glycosyltransferase 28 family.

The protein localises to the cytoplasm. Its subcellular location is the membrane. The catalysed reaction is a sterol + UDP-alpha-D-glucose = a sterol 3-beta-D-glucoside + UDP + H(+). The enzyme catalyses ergosterol + UDP-alpha-D-glucose = ergosteryl 3-beta-D-glucoside + UDP + H(+). In terms of biological role, sterol glycosyltransferase responsible for the glycosylation of ergosterol to form ergosterol-glucoside. The chain is Sterol 3-beta-glucosyltransferase from Cryptococcus neoformans var. neoformans serotype D (strain JEC21 / ATCC MYA-565) (Filobasidiella neoformans).